The following is a 304-amino-acid chain: MILLEINNRIVEETLTVKFKNAIAGNKAESIDVTVADFDGVLFHISNINGDKTKVRTSISLKFYKQLQEHGADELLKREYGDLLVAPEDGYNVSVLVDLENIPENWEETVRKIGLLKRNCFASVFEKYFDFQSQGEGEGEGQKRAVINYRNDETMYVEAKPDRVTVVFSTIFRDEDDVVLGKVFMQELREGRRASHTAPQVLFSHREPPLELANTGARVGENIGYVTFVLFPRHTAKETRDNTINLIHMFRDYLHYHIKCSKAYIHSRMRAKTTEFLKVLNRARPEPKITEKKTITGRTFIRKE.

The protein belongs to the ARPC2 family. Component of the Arp2/3 complex.

The protein resides in the cytoplasm. Its subcellular location is the cytoskeleton. Functions as actin-binding component of the Arp2/3 complex which is involved in regulation of actin polymerization and together with an activating nucleation-promoting factor (NPF) mediates the formation of branched actin networks. Seems to contact the mother actin filament. This Anopheles gambiae (African malaria mosquito) protein is Probable actin-related protein 2/3 complex subunit 2 (Arc-p34).